The chain runs to 325 residues: Melanocortin receptor 5 (325 aa).

The Extracellular segment spans residues 1-37 (MNSSFHLHFLDLNLNATEGNLSGPNVKNKSSPCEDMG). N-linked (GlcNAc...) asparagine glycosylation is found at N2, N15, N20, and N28. The chain crosses the membrane as a helical span at residues 38 to 61 (IAVEVFLTLGVISLLENILVIGAI). Residues 62-73 (VKNKNLHSPMYF) are Cytoplasmic-facing. Residues 74–97 (FVCSLAVADMLVSMSSAWETITIY) traverse the membrane as a helical segment. Residues 98–114 (LLNNKHLVIADAFVRHI) lie on the Extracellular side of the membrane. A helical transmembrane segment spans residues 115 to 138 (DNVFDSMICISVVASMCSLLAIAV). The Cytoplasmic segment spans residues 139 to 155 (DRYVTIFYALRYHHIMT). Residues 156–179 (ARRSGAIIAGIWAFCTGCGIVFIL) form a helical membrane-spanning segment. Residues 180–186 (YSESTYV) lie on the Extracellular side of the membrane. Residues 187 to 211 (ILCLISMFFAMLFLLVSLYIHMFLL) traverse the membrane as a helical segment. Topologically, residues 212–239 (ARTHVKRIAALPRASSARQRTSMQGAVT) are cytoplasmic. A helical membrane pass occupies residues 240–265 (VTMLLGVFTVCWAPFFLHLTLMLSCP). The Extracellular portion of the chain corresponds to 266 to 273 (QNLYCSCF). A helical membrane pass occupies residues 274-297 (MSHFNMYLILIMCNSVMDPLIYAF). At 298–325 (RSQEMRKTFKEIICCRGFRIACSFPRRD) the chain is on the cytoplasmic side. S-palmitoyl cysteine attachment occurs at residues C311 and C312.

Belongs to the G-protein coupled receptor 1 family.

It is found in the cell membrane. In terms of biological role, receptor for MSH (alpha, beta and gamma) and ACTH. The activity of this receptor is mediated by G proteins which activate adenylate cyclase. This receptor is a possible mediator of the immunomodulation properties of melanocortins. This is Melanocortin receptor 5 (MC5R) from Pan troglodytes (Chimpanzee).